A 154-amino-acid chain; its full sequence is Sec-independent protein translocase protein TatB (154 aa).

A helical membrane pass occupies residues 1-21 (MIDIGITKLAIIGGIALIVIG).

The protein belongs to the TatB family. The Tat system comprises two distinct complexes: a TatABC complex, containing multiple copies of TatA, TatB and TatC subunits, and a separate TatA complex, containing only TatA subunits. Substrates initially bind to the TatABC complex, which probably triggers association of the separate TatA complex to form the active translocon.

It localises to the cell inner membrane. Functionally, part of the twin-arginine translocation (Tat) system that transports large folded proteins containing a characteristic twin-arginine motif in their signal peptide across membranes. Together with TatC, TatB is part of a receptor directly interacting with Tat signal peptides. TatB may form an oligomeric binding site that transiently accommodates folded Tat precursor proteins before their translocation. The polypeptide is Sec-independent protein translocase protein TatB (Albidiferax ferrireducens (strain ATCC BAA-621 / DSM 15236 / T118) (Rhodoferax ferrireducens)).